Here is a 388-residue protein sequence, read N- to C-terminus: Probable protein phosphatase 2C 43 (388 aa).

Residues Glu53 to Ile352 form the PPM-type phosphatase domain. The Mn(2+) site is built by Asp84, Gly85, Asp284, and Asp343.

Belongs to the PP2C family. Mg(2+) serves as cofactor. It depends on Mn(2+) as a cofactor.

The catalysed reaction is O-phospho-L-seryl-[protein] + H2O = L-seryl-[protein] + phosphate. The enzyme catalyses O-phospho-L-threonyl-[protein] + H2O = L-threonyl-[protein] + phosphate. This Oryza sativa subsp. japonica (Rice) protein is Probable protein phosphatase 2C 43.